The chain runs to 381 residues: Pentraxin-related protein PTX3 (381 aa).

The first 17 residues, 1–17 (MHLLAILFCALWSAVLA), serve as a signal peptide directing secretion. 2 coiled-coil regions span residues 74–101 (LQAT…SLAR) and 143–167 (EEAG…HAVQ). Cystine bridges form between C179–C357 and C210–C271. Residues 179–381 (CETAILFPMR…QPHGGAQYVS (203 aa)) form the Pentraxin (PTX) domain. Residue N220 is glycosylated (N-linked (GlcNAc...) asparagine).

In terms of assembly, homooctamer; disulfide-linked. Binds to C1q. (Microbial infection) Interacts with SARS coronavirus-2/SARS-CoV-2 Nucleoprotein and Spike protein homotrimer. In terms of processing, glycosylated.

The protein resides in the secreted. Its function is as follows. Plays a role in the regulation of innate resistance to pathogens, inflammatory reactions, possibly clearance of self-components and female fertility. This Homo sapiens (Human) protein is Pentraxin-related protein PTX3.